Here is a 354-residue protein sequence, read N- to C-terminus: Divinyl chlorophyll a/b light-harvesting protein PcbF (354 aa).

6 consecutive transmembrane segments (helical) span residues 27–47 (FIAS…SNTL), 88–108 (VVTL…GGLL), 140–160 (FILG…VEWA), 201–221 (VMGG…FHAI), 248–268 (AILS…AFWC), and 315–335 (TANF…WHAL).

This sequence belongs to the PsbB/PsbC family. IsiA/Pcb subfamily. The antenna complex consists of divinyl chlorophylls (a and b) and divinyl chlorophyll a/b binding proteins and binds more divinyl chlorophyll b than does the antenna complex from high-light-adapted Prochlorococcus. Requires divinyl chlorophyll a as cofactor. Divinyl chlorophyll b is required as a cofactor.

It localises to the cellular thylakoid membrane. In terms of biological role, the antenna complex functions as a light receptor, it captures and delivers excitation energy to photosystems II and I. The Prochlorales pcb genes are not related to higher plant LHCs. The polypeptide is Divinyl chlorophyll a/b light-harvesting protein PcbF (pcbF) (Prochlorococcus marinus (strain SARG / CCMP1375 / SS120)).